The sequence spans 605 residues: uncharacterized protein (605 aa).

Disordered stretches follow at residues 10–78 and 216–248; these read RRGG…FPPA and RAPDCPSPRTPMVKPPFRIPDAKPGLTPSVRNP. Over residues 20 to 48 the composition is skewed to low complexity; sequence AGGRPAAGGRPAAGGRPAAGSRAAAGAAG. Over residues 220-233 the composition is skewed to pro residues; it reads CPSPRTPMVKPPFR.

This is an uncharacterized protein from Dryophytes versicolor (chameleon treefrog).